The chain runs to 179 residues: UPF0316 protein Ping_1367 (179 aa).

2 helical membrane passes run 28-48 (FLAS…SAQV) and 55-75 (WYLA…GISI).

Belongs to the UPF0316 family.

The protein resides in the cell membrane. The sequence is that of UPF0316 protein Ping_1367 from Psychromonas ingrahamii (strain DSM 17664 / CCUG 51855 / 37).